The following is a 390-amino-acid chain: 8-amino-7-oxononanoate synthase (390 aa).

A substrate-binding site is contributed by arginine 19. Pyridoxal 5'-phosphate is bound at residue 106-107; it reads GY. Histidine 131 contributes to the substrate binding site. Pyridoxal 5'-phosphate contacts are provided by serine 176, histidine 204, and threonine 233. N6-(pyridoxal phosphate)lysine is present on lysine 236. Threonine 350 serves as a coordination point for substrate.

Belongs to the class-II pyridoxal-phosphate-dependent aminotransferase family. BioF subfamily. In terms of assembly, homodimer. Pyridoxal 5'-phosphate serves as cofactor.

It carries out the reaction 6-carboxyhexanoyl-[ACP] + L-alanine + H(+) = (8S)-8-amino-7-oxononanoate + holo-[ACP] + CO2. It participates in cofactor biosynthesis; biotin biosynthesis. Its function is as follows. Catalyzes the decarboxylative condensation of pimeloyl-[acyl-carrier protein] and L-alanine to produce 8-amino-7-oxononanoate (AON), [acyl-carrier protein], and carbon dioxide. This Pseudomonas putida (strain ATCC 47054 / DSM 6125 / CFBP 8728 / NCIMB 11950 / KT2440) protein is 8-amino-7-oxononanoate synthase.